Reading from the N-terminus, the 432-residue chain is Glutamyl-tRNA reductase (432 aa).

Substrate is bound by residues 49-52, serine 101, 106-108, and glutamine 112; these read TCNR and EPQ. Residue cysteine 50 is the Nucleophile of the active site. Residue 181 to 186 participates in NADP(+) binding; it reads GAGETI. The disordered stretch occupies residues 407–432; sequence FPEKPGYQHPPIATPIVRTDDADPAP.

Belongs to the glutamyl-tRNA reductase family. In terms of assembly, homodimer.

The enzyme catalyses (S)-4-amino-5-oxopentanoate + tRNA(Glu) + NADP(+) = L-glutamyl-tRNA(Glu) + NADPH + H(+). It participates in porphyrin-containing compound metabolism; protoporphyrin-IX biosynthesis; 5-aminolevulinate from L-glutamyl-tRNA(Glu): step 1/2. Its function is as follows. Catalyzes the NADPH-dependent reduction of glutamyl-tRNA(Glu) to glutamate 1-semialdehyde (GSA). In Xanthomonas oryzae pv. oryzae (strain MAFF 311018), this protein is Glutamyl-tRNA reductase.